The chain runs to 333 residues: Ketol-acid reductoisomerase (NADP(+)) (333 aa).

Positions 2 to 182 (AELFYDDDAD…GGTRAGVIKT (181 aa)) constitute a KARI N-terminal Rossmann domain. NADP(+)-binding positions include 25–28 (YGSQ), serine 51, serine 53, and 83–86 (DPIQ). The active site involves histidine 108. Glycine 134 serves as a coordination point for NADP(+). Residues 183 to 328 (TFTEETETDL…RELRKLMSWV (146 aa)) enclose the KARI C-terminal knotted domain. The Mg(2+) site is built by aspartate 191, glutamate 195, glutamate 227, and glutamate 231. Serine 252 is a binding site for substrate.

Belongs to the ketol-acid reductoisomerase family. Mg(2+) serves as cofactor.

It carries out the reaction (2R)-2,3-dihydroxy-3-methylbutanoate + NADP(+) = (2S)-2-acetolactate + NADPH + H(+). It catalyses the reaction (2R,3R)-2,3-dihydroxy-3-methylpentanoate + NADP(+) = (S)-2-ethyl-2-hydroxy-3-oxobutanoate + NADPH + H(+). It functions in the pathway amino-acid biosynthesis; L-isoleucine biosynthesis; L-isoleucine from 2-oxobutanoate: step 2/4. It participates in amino-acid biosynthesis; L-valine biosynthesis; L-valine from pyruvate: step 2/4. Functionally, involved in the biosynthesis of branched-chain amino acids (BCAA). Catalyzes an alkyl-migration followed by a ketol-acid reduction of (S)-2-acetolactate (S2AL) to yield (R)-2,3-dihydroxy-isovalerate. In the isomerase reaction, S2AL is rearranged via a Mg-dependent methyl migration to produce 3-hydroxy-3-methyl-2-ketobutyrate (HMKB). In the reductase reaction, this 2-ketoacid undergoes a metal-dependent reduction by NADPH to yield (R)-2,3-dihydroxy-isovalerate. This Streptomyces griseus subsp. griseus (strain JCM 4626 / CBS 651.72 / NBRC 13350 / KCC S-0626 / ISP 5235) protein is Ketol-acid reductoisomerase (NADP(+)).